We begin with the raw amino-acid sequence, 328 residues long: tRNA uridine(34) hydroxylase (328 aa).

The Rhodanese domain occupies 130 to 224 (LDEDTVVLDT…YGKDPEVQGE (95 aa)). The active-site Cysteine persulfide intermediate is the C184.

It belongs to the TrhO family.

It carries out the reaction uridine(34) in tRNA + AH2 + O2 = 5-hydroxyuridine(34) in tRNA + A + H2O. In terms of biological role, catalyzes oxygen-dependent 5-hydroxyuridine (ho5U) modification at position 34 in tRNAs. The chain is tRNA uridine(34) hydroxylase from Streptococcus pyogenes serotype M3 (strain SSI-1).